We begin with the raw amino-acid sequence, 446 residues long: UDP-N-acetylmuramate--L-alanine ligase (446 aa).

Position 122-128 (Gly-122–Thr-128) interacts with ATP.

Belongs to the MurCDEF family.

It localises to the cytoplasm. It catalyses the reaction UDP-N-acetyl-alpha-D-muramate + L-alanine + ATP = UDP-N-acetyl-alpha-D-muramoyl-L-alanine + ADP + phosphate + H(+). It functions in the pathway cell wall biogenesis; peptidoglycan biosynthesis. Cell wall formation. This is UDP-N-acetylmuramate--L-alanine ligase from Nocardioides sp. (strain ATCC BAA-499 / JS614).